Here is a 138-residue protein sequence, read N- to C-terminus: Probable prefoldin subunit 4 (138 aa).

It belongs to the prefoldin subunit beta family. In terms of assembly, heterohexamer of two PFD-alpha type and four PFD-beta type subunits.

Its function is as follows. Binds specifically to cytosolic chaperonin (c-CPN) and transfers target proteins to it. Binds to nascent polypeptide chain and promotes folding in an environment in which there are many competing pathways for nonnative proteins. In Drosophila melanogaster (Fruit fly), this protein is Probable prefoldin subunit 4.